We begin with the raw amino-acid sequence, 118 residues long: Small ribosomal subunit protein uS13 (118 aa).

The interval 94 to 118 is disordered; that stretch reads GLPVHGQRTKTNARTRKGPAKSITR.

It belongs to the universal ribosomal protein uS13 family. Part of the 30S ribosomal subunit. Forms a loose heterodimer with protein S19. Forms two bridges to the 50S subunit in the 70S ribosome.

Located at the top of the head of the 30S subunit, it contacts several helices of the 16S rRNA. In the 70S ribosome it contacts the 23S rRNA (bridge B1a) and protein L5 of the 50S subunit (bridge B1b), connecting the 2 subunits; these bridges are implicated in subunit movement. Contacts the tRNAs in the A and P-sites. The chain is Small ribosomal subunit protein uS13 from Acidithiobacillus ferrooxidans (strain ATCC 23270 / DSM 14882 / CIP 104768 / NCIMB 8455) (Ferrobacillus ferrooxidans (strain ATCC 23270)).